We begin with the raw amino-acid sequence, 353 residues long: RNA 3'-terminal phosphate cyclase (353 aa).

ATP is bound by residues Q103 and 297–301 (HLADQ). H322 (tele-AMP-histidine intermediate) is an active-site residue.

The protein belongs to the RNA 3'-terminal cyclase family. Type 1 subfamily.

Its subcellular location is the cytoplasm. The enzyme catalyses a 3'-end 3'-phospho-ribonucleotide-RNA + ATP = a 3'-end 2',3'-cyclophospho-ribonucleotide-RNA + AMP + diphosphate. Its function is as follows. Catalyzes the conversion of 3'-phosphate to a 2',3'-cyclic phosphodiester at the end of RNA. The mechanism of action of the enzyme occurs in 3 steps: (A) adenylation of the enzyme by ATP; (B) transfer of adenylate to an RNA-N3'P to produce RNA-N3'PP5'A; (C) and attack of the adjacent 2'-hydroxyl on the 3'-phosphorus in the diester linkage to produce the cyclic end product. The biological role of this enzyme is unknown but it is likely to function in some aspects of cellular RNA processing. The sequence is that of RNA 3'-terminal phosphate cyclase from Salmonella heidelberg (strain SL476).